The sequence spans 311 residues: Nudix hydrolase 9 (311 aa).

The Nudix hydrolase domain maps to 131–298; the sequence is SSPLGNGAVI…GFALYELMLQ (168 aa). Residues 192-213 carry the Nudix box motif; it reads LNKKVTQEMFDSIICEVVEETG. Residues Glu-207 and Glu-211 each contribute to the Mg(2+) site.

Belongs to the Nudix hydrolase family. Requires Mg(2+) as cofactor. The cofactor is Mn(2+). As to expression, expressed in roots, stems and leaves.

Probably mediates the hydrolysis of some nucleoside diphosphate derivatives. This chain is Nudix hydrolase 9 (NUDT9), found in Arabidopsis thaliana (Mouse-ear cress).